Reading from the N-terminus, the 450-residue chain is Protein tweety homolog 1 (450 aa).

At 1 to 43 the chain is on the extracellular side; that stretch reads MGAPPGYRPSAWVHLLHQLPRADFQLRPVPSAFAPQEREYQQA. A helical membrane pass occupies residues 44 to 64; the sequence is LLLVAALAGLGLGLSLIFIAV. Residues 65 to 88 are Cytoplasmic-facing; the sequence is YLIRFCCCRPPEPPGAKSPPPGGG. Residues 89–109 traverse the membrane as a helical segment; it reads CVTWNCIAALLVGCAGIGVGF. Residues 110–214 lie on the Extracellular side of the membrane; the sequence is YGNSETSDGV…DVSFVEEYRW (105 aa). N-linked (GlcNAc...) asparagine glycosylation is present at Asn-130. The chain crosses the membrane as a helical span at residues 215–235; sequence LAYVLLLLLELLVCLFTLLGL. Residues 236–240 lie on the Cytoplasmic side of the membrane; the sequence is ARQSK. A helical transmembrane segment spans residues 241–261; it reads WLVIVMTVMSLLVLVLSWGSM. The Extracellular portion of the chain corresponds to 262–390; sequence GLEAATAVGL…LRGLCEDTLE (129 aa). 2 disulfides stabilise this stretch: Cys-275–Cys-385 and Cys-303–Cys-370. N-linked (GlcNAc...) asparagine glycosylation is found at Asn-284 and Asn-355. The helical transmembrane segment at 391–411 threads the bilayer; that stretch reads GLLFLLLFSLLSAGALATVLC. Residues 412–450 lie on the Cytoplasmic side of the membrane; the sequence is SLPRAWALFPPSDDYEDTDDDDPFNPQESKRFVQWQSSI. The segment at 427 to 450 is disordered; it reads EDTDDDDPFNPQESKRFVQWQSSI. Ser-440 carries the phosphoserine modification.

It belongs to the tweety family. As to quaternary structure, homotetramer; disulfide-linked. Homodimer. In terms of processing, N-glycosylated. Contains high-mannose, hybrid and complex oligosaccharides.

The protein resides in the cell membrane. The catalysed reaction is chloride(in) = chloride(out). It carries out the reaction L-glutamate(out) = L-glutamate(in). Its function is as follows. Calcium-independent, swelling-dependent volume-regulated anion channel (VRAC-swell) which plays a pivotal role in the process of regulatory volume decrease (RVD) in the brain through the efflux of anions like chloride and organic osmolytes like glutamate. The chain is Protein tweety homolog 1 (TTYH1) from Bos taurus (Bovine).